We begin with the raw amino-acid sequence, 205 residues long: Cytochrome c biogenesis ATP-binding export protein CcmA 1 (205 aa).

The region spanning L2–L205 is the ABC transporter domain. G34–T41 provides a ligand contact to ATP.

Belongs to the ABC transporter superfamily. CcmA exporter (TC 3.A.1.107) family. The complex is composed of two ATP-binding proteins (CcmA) and two transmembrane proteins (CcmB).

Its subcellular location is the cell inner membrane. The enzyme catalyses heme b(in) + ATP + H2O = heme b(out) + ADP + phosphate + H(+). Part of the ABC transporter complex CcmAB involved in the biogenesis of c-type cytochromes; once thought to export heme, this seems not to be the case, but its exact role is uncertain. Responsible for energy coupling to the transport system. In Salmonella typhimurium (strain LT2 / SGSC1412 / ATCC 700720), this protein is Cytochrome c biogenesis ATP-binding export protein CcmA 1.